The following is a 280-amino-acid chain: Lysosome-associated membrane glycoprotein 5 (280 aa).

Positions 1-29 (MDLRRRALLGVDGLRVLLMLFHTVTRIMA) are cleaved as a signal peptide. The Extracellular portion of the chain corresponds to 30 to 235 (EQEVENLSGL…PVDEREQLEE (206 aa)). N-linked (GlcNAc...) asparagine glycosylation is found at asparagine 35 and asparagine 53. The chain crosses the membrane as a helical span at residues 236–256 (TLPLILGLILGLVIVVTLVIY). Topologically, residues 257–280 (HIHHKMTANQVQIPRDRSQYKHMG) are cytoplasmic.

The protein belongs to the LAMP family. Glycosylated.

It is found in the cytoplasmic vesicle membrane. It localises to the cell membrane. Its subcellular location is the cell projection. The protein localises to the dendrite. The protein resides in the cytoplasmic vesicle. It is found in the secretory vesicle. It localises to the synaptic vesicle membrane. Its subcellular location is the growth cone membrane. The protein localises to the early endosome membrane. The protein resides in the recycling endosome. It is found in the endoplasmic reticulum-Golgi intermediate compartment membrane. It localises to the endosome membrane. Its function is as follows. Plays a role in short-term synaptic plasticity in a subset of GABAergic neurons in the brain. The polypeptide is Lysosome-associated membrane glycoprotein 5 (LAMP5) (Bos taurus (Bovine)).